Here is a 313-residue protein sequence, read N- to C-terminus: Myeloma-overexpressed gene protein (313 aa).

The segment at 107–129 is disordered; sequence ERNKGDKGAQTGAGLSQEAEDVD.

The sequence is that of Myeloma-overexpressed gene protein (MYEOV) from Homo sapiens (Human).